The primary structure comprises 344 residues: Phenylalanine--tRNA ligase alpha subunit (344 aa).

E256 lines the Mg(2+) pocket.

This sequence belongs to the class-II aminoacyl-tRNA synthetase family. Phe-tRNA synthetase alpha subunit type 1 subfamily. Tetramer of two alpha and two beta subunits. Requires Mg(2+) as cofactor.

The protein resides in the cytoplasm. The enzyme catalyses tRNA(Phe) + L-phenylalanine + ATP = L-phenylalanyl-tRNA(Phe) + AMP + diphosphate + H(+). The sequence is that of Phenylalanine--tRNA ligase alpha subunit from Bacillus cereus (strain G9842).